A 479-amino-acid chain; its full sequence is Glutamate--tRNA ligase (479 aa).

The short motif at Pro-9–Thr-19 is the 'HIGH' region element. The short motif at Lys-243 to Arg-247 is the 'KMSKS' region element. Lys-246 contributes to the ATP binding site.

It belongs to the class-I aminoacyl-tRNA synthetase family. Glutamate--tRNA ligase type 1 subfamily. Monomer.

It is found in the cytoplasm. The enzyme catalyses tRNA(Glu) + L-glutamate + ATP = L-glutamyl-tRNA(Glu) + AMP + diphosphate. In terms of biological role, catalyzes the attachment of glutamate to tRNA(Glu) in a two-step reaction: glutamate is first activated by ATP to form Glu-AMP and then transferred to the acceptor end of tRNA(Glu). The polypeptide is Glutamate--tRNA ligase (Synechococcus sp. (strain JA-2-3B'a(2-13)) (Cyanobacteria bacterium Yellowstone B-Prime)).